A 423-amino-acid polypeptide reads, in one-letter code: Imidazolonepropionase (423 aa).

2 residues coordinate Fe(3+): His91 and His93. 2 residues coordinate Zn(2+): His91 and His93. 3 residues coordinate 4-imidazolone-5-propanoate: Arg100, Tyr163, and His193. Tyr163 lines the N-formimidoyl-L-glutamate pocket. A Fe(3+)-binding site is contributed by His257. Zn(2+) is bound at residue His257. Residue Gln260 participates in 4-imidazolone-5-propanoate binding. Residue Asp331 coordinates Fe(3+). Asp331 contributes to the Zn(2+) binding site. N-formimidoyl-L-glutamate contacts are provided by Asn333 and Gly335. Thr336 provides a ligand contact to 4-imidazolone-5-propanoate.

Belongs to the metallo-dependent hydrolases superfamily. HutI family. The cofactor is Zn(2+). Fe(3+) is required as a cofactor.

It localises to the cytoplasm. It carries out the reaction 4-imidazolone-5-propanoate + H2O = N-formimidoyl-L-glutamate. It participates in amino-acid degradation; L-histidine degradation into L-glutamate; N-formimidoyl-L-glutamate from L-histidine: step 3/3. Its function is as follows. Catalyzes the hydrolytic cleavage of the carbon-nitrogen bond in imidazolone-5-propanoate to yield N-formimidoyl-L-glutamate. It is the third step in the universal histidine degradation pathway. In Bdellovibrio bacteriovorus (strain ATCC 15356 / DSM 50701 / NCIMB 9529 / HD100), this protein is Imidazolonepropionase.